Here is a 184-residue protein sequence, read N- to C-terminus: Oligoribonuclease (184 aa).

In terms of domain architecture, Exonuclease spans Leu-10 to Leu-172. Residue Tyr-129 is part of the active site.

The protein belongs to the oligoribonuclease family.

The protein localises to the cytoplasm. In terms of biological role, 3'-to-5' exoribonuclease specific for small oligoribonucleotides. The chain is Oligoribonuclease from Tropheryma whipplei (strain Twist) (Whipple's bacillus).